The chain runs to 599 residues: Glycerophosphodiester phosphodiesterase domain-containing protein 5 (599 aa).

Over 1–42 (MVKHQPLQYYEPQLCLSCLTGIYGCRWKRYQRSHDDTTKWER) the chain is Cytoplasmic. 2 disulfide bridges follow: cysteine 15-cysteine 18 and cysteine 25-cysteine 576. Residues 43-63 (LWFLILTSSFFLTLVWFYFWW) traverse the membrane as a helical segment. Over 64 to 87 (EVHNDYNEINWFLYNRMGYWSDWS) the chain is Extracellular. Residues 88–108 (IPILVTTAAGFTYITVLLILA) form a helical membrane-spanning segment. The Cytoplasmic portion of the chain corresponds to 109–125 (LCHIAVGQQMNLHWLHK). A helical membrane pass occupies residues 126 to 146 (IGLMTTLITTVVTMSSIAQLW). At 147–160 (DDEWEMVFISLQAT) the chain is on the extracellular side. The helical transmembrane segment at 161–181 (APFLHIGALAAVTALSWLIAG) threads the bilayer. Residues 182 to 192 (QFARMEKATSQ) are Cytoplasmic-facing. Residues 193–213 (MLMVTAYLAVVVALYLVPLTI) traverse the membrane as a helical segment. Residues 214–497 (SSPCIMEKKA…IWLMPPDEYR (284 aa)) are Extracellular-facing. Positions 228-485 (PAIIGHRGAP…DSSHVLRKVP (258 aa)) constitute a GP-PDE domain. Asparagine 301, asparagine 336, asparagine 352, asparagine 374, and asparagine 448 each carry an N-linked (GlcNAc...) asparagine glycan. A helical membrane pass occupies residues 498–518 (LIWITSDLISFIIIVGVFIFQ). Over 519 to 599 (NYHNDQWRLG…DHRDTRLRMN (81 aa)) the chain is Cytoplasmic.

It belongs to the glycerophosphoryl diester phosphodiesterase family. As to quaternary structure, interacts with PRDX1; forms a mixed-disulfide with PRDX1, leading to disrupt intramolecular disulfide bond between Cys-25 and Cys-576. Post-translationally, intramolecular disulfide bond between Cys-25 and Cys-576 is reduced by PRDX1. As to expression, detected in mature motor neurons.

It is found in the endomembrane system. The protein localises to the cytoplasm. Its subcellular location is the perinuclear region. It localises to the cell projection. The protein resides in the growth cone. It catalyses the reaction a 1,2-diacyl-sn-glycero-3-phospho-(1D-myo-inositol-4,5-bisphosphate) + H2O = 1D-myo-inositol 1,4,5-trisphosphate + a 1,2-diacyl-sn-glycerol + H(+). It carries out the reaction sn-glycerol 3-phosphocholine + H2O = sn-glycerol 3-phosphate + choline + H(+). With respect to regulation, activated by PRDX1 by reduction of an intramolecular disulfide bond. In terms of biological role, glycerophosphodiester phosphodiesterase that promotes cell cycle exit and drives spinal motor neuron differentiation. Mediates the cleavage of glycosylphosphatidylinositol (GPI) anchor of target proteins: removes the GPI-anchor of RECK, leading to release RECK from the plasma membrane. May contribute to the osmotic regulation of cellular glycerophosphocholine. The chain is Glycerophosphodiester phosphodiesterase domain-containing protein 5 (GDPD5) from Gallus gallus (Chicken).